We begin with the raw amino-acid sequence, 183 residues long: Integrase-like protein y4lS (183 aa).

The Resolvase/invertase-type recombinase catalytic domain occupies 2–136 (ARIGYARTFT…EGIAAARKRG (135 aa)).

The protein belongs to the site-specific recombinase resolvase family.

This is Integrase-like protein y4lS from Sinorhizobium fredii (strain NBRC 101917 / NGR234).